We begin with the raw amino-acid sequence, 276 residues long: Pantothenate synthetase (276 aa).

Residue 26-33 (MGYLHEGH) coordinates ATP. His33 functions as the Proton donor in the catalytic mechanism. Gln57 contacts (R)-pantoate. Beta-alanine is bound at residue Gln57. 142–145 (GLKD) is an ATP binding site. Gln148 lines the (R)-pantoate pocket. Residues Ile171 and 179–182 (KSSR) contribute to the ATP site.

It belongs to the pantothenate synthetase family. Homodimer.

The protein localises to the cytoplasm. It carries out the reaction (R)-pantoate + beta-alanine + ATP = (R)-pantothenate + AMP + diphosphate + H(+). The protein operates within cofactor biosynthesis; (R)-pantothenate biosynthesis; (R)-pantothenate from (R)-pantoate and beta-alanine: step 1/1. Catalyzes the condensation of pantoate with beta-alanine in an ATP-dependent reaction via a pantoyl-adenylate intermediate. This chain is Pantothenate synthetase, found in Exiguobacterium sp. (strain ATCC BAA-1283 / AT1b).